We begin with the raw amino-acid sequence, 427 residues long: Hydroxylamine reductase (427 aa).

Cys3, Cys6, Cys15, and Cys21 together coordinate [4Fe-4S] cluster. Residues His129, Glu153, Cys197, Cys283, Cys311, Cys336, Glu370, and Lys372 each contribute to the hybrid [4Fe-2O-2S] cluster site. A Cysteine persulfide modification is found at Cys283.

The protein belongs to the HCP family. It depends on [4Fe-4S] cluster as a cofactor. Hybrid [4Fe-2O-2S] cluster serves as cofactor.

It is found in the cytoplasm. The catalysed reaction is A + NH4(+) + H2O = hydroxylamine + AH2 + H(+). Functionally, catalyzes the reduction of hydroxylamine to form NH(3) and H(2)O. The sequence is that of Hydroxylamine reductase from Moorella thermoacetica (strain ATCC 39073 / JCM 9320).